A 404-amino-acid chain; its full sequence is Formate-dependent phosphoribosylglycinamide formyltransferase (404 aa).

Residues 25-26 (EL) and E85 contribute to the N(1)-(5-phospho-beta-D-ribosyl)glycinamide site. ATP-binding positions include R118, K159, 164–169 (SSGKGQ), 199–202 (EGFI), and E207. Residues 123 to 318 (RLAAEELGLA…EFELHARAIL (196 aa)) form the ATP-grasp domain. The Mg(2+) site is built by E277 and E289. N(1)-(5-phospho-beta-D-ribosyl)glycinamide-binding positions include D296, K365, and 372 to 373 (RR).

This sequence belongs to the PurK/PurT family. As to quaternary structure, homodimer.

The catalysed reaction is N(1)-(5-phospho-beta-D-ribosyl)glycinamide + formate + ATP = N(2)-formyl-N(1)-(5-phospho-beta-D-ribosyl)glycinamide + ADP + phosphate + H(+). It participates in purine metabolism; IMP biosynthesis via de novo pathway; N(2)-formyl-N(1)-(5-phospho-D-ribosyl)glycinamide from N(1)-(5-phospho-D-ribosyl)glycinamide (formate route): step 1/1. Its function is as follows. Involved in the de novo purine biosynthesis. Catalyzes the transfer of formate to 5-phospho-ribosyl-glycinamide (GAR), producing 5-phospho-ribosyl-N-formylglycinamide (FGAR). Formate is provided by PurU via hydrolysis of 10-formyl-tetrahydrofolate. The protein is Formate-dependent phosphoribosylglycinamide formyltransferase of Burkholderia vietnamiensis (strain G4 / LMG 22486) (Burkholderia cepacia (strain R1808)).